A 148-amino-acid polypeptide reads, in one-letter code: MHLAYPAVLAALLFCVGLYGVLARRNAILVLMSVELMLNAVNLNLVAFDVWLRDTLHSGQALTLFTIAIAAAEIGIGLAIVLAVYRNRGTSAIDRLRDTAETDAAETLPDDAGTGPSGTDAAPNGDTTTATGRPGDNAGKNKKAEATR.

3 consecutive transmembrane segments (helical) span residues 3–23, 28–48, and 64–84; these read LAYP…GVLA, ILVL…LVAF, and LFTI…VLAV. Residues 96-148 form a disordered region; sequence LRDTAETDAAETLPDDAGTGPSGTDAAPNGDTTTATGRPGDNAGKNKKAEATR.

This sequence belongs to the complex I subunit 4L family. NDH-1 is composed of 14 different subunits. Subunits NuoA, H, J, K, L, M, N constitute the membrane sector of the complex.

The protein localises to the cell membrane. It catalyses the reaction a quinone + NADH + 5 H(+)(in) = a quinol + NAD(+) + 4 H(+)(out). In terms of biological role, NDH-1 shuttles electrons from NADH, via FMN and iron-sulfur (Fe-S) centers, to quinones in the respiratory chain. The immediate electron acceptor for the enzyme in this species is believed to be a menaquinone. Couples the redox reaction to proton translocation (for every two electrons transferred, four hydrogen ions are translocated across the cytoplasmic membrane), and thus conserves the redox energy in a proton gradient. The chain is NADH-quinone oxidoreductase subunit K 2 from Streptomyces griseus subsp. griseus (strain JCM 4626 / CBS 651.72 / NBRC 13350 / KCC S-0626 / ISP 5235).